A 379-amino-acid chain; its full sequence is Chaperone protein DnaJ (379 aa).

The 66-residue stretch at 5-70 (DYYETLEVSQ…QKRAAYDQYG (66 aa)) folds into the J domain. The segment at 135-213 (GKSLEIKVPT…CRGQGRVEKT (79 aa)) adopts a CR-type zinc-finger fold. Zn(2+) contacts are provided by cysteine 148, cysteine 151, cysteine 165, cysteine 168, cysteine 187, cysteine 190, cysteine 201, and cysteine 204. CXXCXGXG motif repeat units lie at residues 148–155 (CEPCDGSG), 165–172 (CSTCHGHG), 187–194 (CPTCSGKG), and 201–208 (CTSCRGQG).

The protein belongs to the DnaJ family. Homodimer. It depends on Zn(2+) as a cofactor.

Its subcellular location is the cytoplasm. Participates actively in the response to hyperosmotic and heat shock by preventing the aggregation of stress-denatured proteins and by disaggregating proteins, also in an autonomous, DnaK-independent fashion. Unfolded proteins bind initially to DnaJ; upon interaction with the DnaJ-bound protein, DnaK hydrolyzes its bound ATP, resulting in the formation of a stable complex. GrpE releases ADP from DnaK; ATP binding to DnaK triggers the release of the substrate protein, thus completing the reaction cycle. Several rounds of ATP-dependent interactions between DnaJ, DnaK and GrpE are required for fully efficient folding. Also involved, together with DnaK and GrpE, in the DNA replication of plasmids through activation of initiation proteins. In Colwellia maris, this protein is Chaperone protein DnaJ.